Consider the following 601-residue polypeptide: Glutamyl-tRNA(Gln) amidotransferase subunit B, mitochondrial (601 aa).

A mitochondrion-targeting transit peptide spans 1–52; it reads MLQQWLRQSPGAARFLRGSCCRGPQSGSLRHSPLPTAPHRCIRSLQTSATES.

The protein belongs to the GatB/GatE family. GatB subfamily. As to quaternary structure, subunit of the heterotrimeric GatCAB amidotransferase (AdT) complex, composed of A, B and C subunits.

It is found in the mitochondrion. The enzyme catalyses L-glutamyl-tRNA(Gln) + L-glutamine + ATP + H2O = L-glutaminyl-tRNA(Gln) + L-glutamate + ADP + phosphate + H(+). Functionally, allows the formation of correctly charged Gln-tRNA(Gln) through the transamidation of misacylated Glu-tRNA(Gln) in the mitochondria. The reaction takes place in the presence of glutamine and ATP through an activated gamma-phospho-Glu-tRNA(Gln). This chain is Glutamyl-tRNA(Gln) amidotransferase subunit B, mitochondrial, found in Neosartorya fischeri (strain ATCC 1020 / DSM 3700 / CBS 544.65 / FGSC A1164 / JCM 1740 / NRRL 181 / WB 181) (Aspergillus fischerianus).